Here is a 249-residue protein sequence, read N- to C-terminus: MTINRKPIFRRVLLKLSGEALMGDEGFGIDPKVLDRMAQEIKELVELDVEVGLVIGGGNFLRGGSLAEAGMNRVVGDHMGMLATVMNGLAMRDALHRAFVNCRLMSAIPLHGMCDAYNWAEAISLLKTGRVVIFAAGTGNPFFTTDSAACLRGIEIEADTVIKATKVDGVYSDDPVKNPDATLYRHLSYNEIIEKELKVMDLAAFTLARDHNMPLSVFNMNKSGALKRVIMGEEEGTLISSQASDEVIK.

15 to 18 (KLSG) lines the ATP pocket. Residues 23 to 28 (GDEGFG) are involved in allosteric activation by GTP. G57 is a binding site for UMP. The ATP site is built by G58 and R62. Residues D77 and 138-145 (TGNPFFTT) each bind UMP. Residues T165, Y171, and D174 each contribute to the ATP site.

The protein belongs to the UMP kinase family. As to quaternary structure, homohexamer.

The protein localises to the cytoplasm. The enzyme catalyses UMP + ATP = UDP + ADP. It participates in pyrimidine metabolism; CTP biosynthesis via de novo pathway; UDP from UMP (UMPK route): step 1/1. Its activity is regulated as follows. Allosterically activated by GTP. Inhibited by UTP. Its function is as follows. Catalyzes the reversible phosphorylation of UMP to UDP. The protein is Uridylate kinase of Pseudoalteromonas translucida (strain TAC 125).